A 159-amino-acid chain; its full sequence is Cytochrome c-type biogenesis protein CcmE (159 aa).

At 1–7 (MTRKGRR) the chain is on the cytoplasmic side. The helical; Signal-anchor for type II membrane protein transmembrane segment at 8 to 28 (LVLIGAGLGVLALAAGLILSA) threads the bilayer. Residues 29-159 (LNDTIVFFRS…AAPVQRAPGS (131 aa)) lie on the Periplasmic side of the membrane. Residues His-121 and Tyr-125 each coordinate heme. The segment at 134 to 159 (LKKQGRWQEGGPAPGTAAPVQRAPGS) is disordered.

Belongs to the CcmE/CycJ family.

The protein resides in the cell inner membrane. Heme chaperone required for the biogenesis of c-type cytochromes. Transiently binds heme delivered by CcmC and transfers the heme to apo-cytochromes in a process facilitated by CcmF and CcmH. In Xanthobacter autotrophicus (strain ATCC BAA-1158 / Py2), this protein is Cytochrome c-type biogenesis protein CcmE.